The chain runs to 180 residues: Ribosome maturation factor RimM (180 aa).

The 74-residue stretch at 104-177 folds into the PRC barrel domain; it reads PEEFHDHQLV…RVVVDPPGGL (74 aa).

The protein belongs to the RimM family. In terms of assembly, binds ribosomal protein uS19.

The protein localises to the cytoplasm. Its function is as follows. An accessory protein needed during the final step in the assembly of 30S ribosomal subunit, possibly for assembly of the head region. Essential for efficient processing of 16S rRNA. May be needed both before and after RbfA during the maturation of 16S rRNA. It has affinity for free ribosomal 30S subunits but not for 70S ribosomes. This Salinispora arenicola (strain CNS-205) protein is Ribosome maturation factor RimM.